The following is a 329-amino-acid chain: Alpha/beta hydrolase domain-containing protein 17C (329 aa).

The segment at 46 to 85 (APEQRGPGAPAPASAASTSSASAAAQPAPQQPEEGGAGPG) is disordered. A compositionally biased stretch (low complexity) spans 51-79 (GPGAPAPASAASTSSASAAAQPAPQQPEE). Active-site charge relay system residues include Ser-211, Asp-276, and His-305.

The protein belongs to the AB hydrolase superfamily. ABHD17 family. In terms of processing, palmitoylated on cysteine residues located in a cysteine cluster at the N-terminus which promotes membrane localization. Palmitoylation is required for post-synaptic localization and for depalmitoylating activity towards DLG4/PSD95.

It localises to the recycling endosome membrane. It is found in the cell projection. The protein resides in the dendritic spine. The protein localises to the postsynaptic density membrane. It carries out the reaction S-hexadecanoyl-L-cysteinyl-[protein] + H2O = L-cysteinyl-[protein] + hexadecanoate + H(+). Hydrolyzes fatty acids from S-acylated cysteine residues in proteins. Has depalmitoylating activity towards NRAS and DLG4/PSD95. The chain is Alpha/beta hydrolase domain-containing protein 17C from Bos taurus (Bovine).